The following is a 906-amino-acid chain: Protein translocase subunit SecA (906 aa).

Residues Gln-86, 104–108, and Asp-511 each bind ATP; that span reads GEGKT. Composition is skewed to basic and acidic residues over residues 853–865 and 877–888; these read HESV…RHDE and VRREGPKVKRND. The segment at 853–906 is disordered; the sequence is HESVIDNNQRHDEDEQEETPKVQQVRREGPKVKRNDPCPCGSGKKYKQCHGKVE. Zn(2+) contacts are provided by Cys-890, Cys-892, Cys-901, and His-902. Positions 896–906 are enriched in basic residues; it reads KKYKQCHGKVE.

This sequence belongs to the SecA family. Monomer and homodimer. Part of the essential Sec protein translocation apparatus which comprises SecA, SecYEG and auxiliary proteins SecDF-YajC and YidC. The cofactor is Zn(2+).

Its subcellular location is the cell inner membrane. The protein resides in the cytoplasm. The catalysed reaction is ATP + H2O + cellular proteinSide 1 = ADP + phosphate + cellular proteinSide 2.. Its function is as follows. Part of the Sec protein translocase complex. Interacts with the SecYEG preprotein conducting channel. Has a central role in coupling the hydrolysis of ATP to the transfer of proteins into and across the cell membrane, serving both as a receptor for the preprotein-SecB complex and as an ATP-driven molecular motor driving the stepwise translocation of polypeptide chains across the membrane. The chain is Protein translocase subunit SecA from Francisella tularensis subsp. novicida (strain U112).